A 1047-amino-acid chain; its full sequence is uncharacterized protein (1047 aa).

Lys-17 carries the N6-acetyllysine modification. Disordered stretches follow at residues 172–208 and 236–283; these read PPCS…GSFS and RNSK…PQAL. Ser-208 carries the post-translational modification Phosphoserine. Residues 237–254 are compositionally biased toward polar residues; the sequence is NSKQAMSEGPSSPWTQLA. Residues 268–283 are compositionally biased toward pro residues; it reads HYPPPHHPPPHPPQAL. A phosphoserine mark is found at Ser-299 and Ser-391. Thr-397 bears the Phosphothreonine mark. Disordered stretches follow at residues 448 to 469, 482 to 504, 519 to 567, 668 to 690, 714 to 763, 931 to 1004, and 1021 to 1047; these read EKLQ…DSPV, ECQS…PVID, PAPE…LRGS, PSTP…GPIG, VAVA…GDSL, EAGA…TLKA, and PTWG…SHHL. Ser-455, Ser-496, and Ser-497 each carry phosphoserine. Low complexity-rich tracts occupy residues 729–741 and 751–762; these read PARA…ARDP and PAPASTSAPGDS. Residues Ser-936, Ser-956, Ser-988, and Ser-996 each carry the phosphoserine modification. Over residues 978–996 the composition is skewed to low complexity; that stretch reads AAAGEESCGASPTPATSAS.

This is an uncharacterized protein from Homo sapiens (Human).